Reading from the N-terminus, the 60-residue chain is L-amino-acid oxidase (60 aa).

1-4 (GPMR) is an FAD binding site. Residue Arg4 participates in substrate binding.

The protein belongs to the flavin monoamine oxidase family. FIG1 subfamily. Homodimer; non-covalently linked. It depends on FAD as a cofactor. Post-translationally, contains 2 disulfide bonds. N-glycosylated. As to expression, expressed by the venom gland.

It localises to the secreted. It catalyses the reaction an L-alpha-amino acid + O2 + H2O = a 2-oxocarboxylate + H2O2 + NH4(+). Catalyzes an oxidative deamination of predominantly hydrophobic and aromatic L-amino acids, thus producing hydrogen peroxide that may contribute to the diverse toxic effects of this enzyme. Exhibits diverse biological activities, such as hemorrhage, hemolysis, edema, apoptosis of vascular endothelial cells or tumor cell lines, antibacterial and antiparasitic activities, as well as regulation of platelet aggregation. Effects of snake L-amino oxidases on platelets are controversial, since they either induce aggregation or inhibit agonist-induced aggregation. These different effects are probably due to different experimental conditions. The chain is L-amino-acid oxidase from Bitis gabonica (Gaboon adder).